Consider the following 1796-residue polypeptide: Non-reducing polyketide synthase nscA (1796 aa).

An N-terminal acylcarrier protein transacylase domain (SAT) region spans residues 18–256 (DDLKDLFRRL…PLPVYDGLCH (239 aa)). Positions 392-825 (SSKLAIVGMA…GGNTTLLLED (434 aa)) constitute a Ketosynthase family 3 (KS3) domain. Residues Cys565, His700, and His743 each act as for beta-ketoacyl synthase activity in the active site. The malonyl-CoA:ACP transacylase (MAT) domain stretch occupies residues 931–1251 (FTGQGAYYSG…SLVTLHLAGL (321 aa)). Residues 1317-1636 (TSLVHQITAE…RLLMDRFFSP (320 aa)) form a product template (PT) domain region. The interval 1321 to 1457 (HQITAETVEA…ATVRFEDPVA (137 aa)) is N-terminal hotdog fold. The 311-residue stretch at 1321 to 1631 (HQITAETVEA…FRRVPRLLMD (311 aa)) folds into the PKS/mFAS DH domain. Residue His1353 is the Proton acceptor; for dehydratase activity of the active site. Residues 1485–1631 (ASRLSKPLAY…FRRVPRLLMD (147 aa)) form a C-terminal hotdog fold region. Catalysis depends on Asp1542, which acts as the Proton donor; for dehydratase activity. Residues 1688 to 1720 (TPESTPPLAPSSESSTPKESPIATPPESERADP) form a disordered region. A compositionally biased stretch (low complexity) spans 1697–1708 (PSSESSTPKESP). The 78-residue stretch at 1719–1796 (DPMDNMVSQC…EMTAWIEEYC (78 aa)) folds into the Carrier domain. Ser1756 carries the O-(pantetheine 4'-phosphoryl)serine modification.

Requires pantetheine 4'-phosphate as cofactor.

It participates in secondary metabolite biosynthesis. Non-reducing polyketide synthase; part of the gene cluster that mediates the biosynthesis of neosartoricin B, a prenylated anthracenone that probably exhibits T-cell antiproliferative activity, suggestive of a physiological role as an immunosuppressive agent. The non-reducing polyketide synthase nscA probably synthesizes and cyclizes the decaketide backbone. The hydrolase nscB then mediates the product release through hydrolysis followed by spontaneous decarboxylation. The prenyltransferase nscD catalyzes the addition of the dimethylallyl group to the aromatic C5. The FAD-dependent monooxygenase nscC is then responsible for the stereospecific hydroxylation at C2. Neosartoricin B can be converted into two additional compounds neosartoricins C and D. Neosartoricin C is a spirocyclic compound that is cyclized through the attack of C3 hydroxyl on C14, followed by dehydration. On the other hand, neosartoricin D is a further cyclized compound in which attack of C2 on C14 in neosartoricin C results in the formation of the acetal-containing dioxabicyclo-octanone ring. Both of these compounds are novel and possibly represent related metabolites of the gene cluster. The chain is Non-reducing polyketide synthase nscA from Arthroderma otae (strain ATCC MYA-4605 / CBS 113480) (Microsporum canis).